A 64-amino-acid chain; its full sequence is Large ribosomal subunit protein bL35 (64 aa).

The interval 1–23 (MPKMKTKSGAAKRFKKTANGFKH) is disordered.

It belongs to the bacterial ribosomal protein bL35 family.

This is Large ribosomal subunit protein bL35 from Stutzerimonas stutzeri (strain A1501) (Pseudomonas stutzeri).